We begin with the raw amino-acid sequence, 72 residues long: Translation initiation factor IF-1 (72 aa).

Residues 1–72 (MAKDNVIEIE…SKGRITYRFK (72 aa)) form the S1-like domain.

The protein belongs to the IF-1 family. Component of the 30S ribosomal translation pre-initiation complex which assembles on the 30S ribosome in the order IF-2 and IF-3, IF-1 and N-formylmethionyl-tRNA(fMet); mRNA recruitment can occur at any time during PIC assembly.

It localises to the cytoplasm. Its function is as follows. One of the essential components for the initiation of protein synthesis. Stabilizes the binding of IF-2 and IF-3 on the 30S subunit to which N-formylmethionyl-tRNA(fMet) subsequently binds. Helps modulate mRNA selection, yielding the 30S pre-initiation complex (PIC). Upon addition of the 50S ribosomal subunit IF-1, IF-2 and IF-3 are released leaving the mature 70S translation initiation complex. The sequence is that of Translation initiation factor IF-1 from Pediococcus pentosaceus (strain ATCC 25745 / CCUG 21536 / LMG 10740 / 183-1w).